The chain runs to 319 residues: Ribonuclease Z (319 aa).

7 residues coordinate Zn(2+): H62, H64, D66, H67, H139, D209, and H268. The active-site Proton acceptor is the D66.

This sequence belongs to the RNase Z family. As to quaternary structure, homodimer. Zn(2+) is required as a cofactor.

The catalysed reaction is Endonucleolytic cleavage of RNA, removing extra 3' nucleotides from tRNA precursor, generating 3' termini of tRNAs. A 3'-hydroxy group is left at the tRNA terminus and a 5'-phosphoryl group is left at the trailer molecule.. Functionally, zinc phosphodiesterase, which displays some tRNA 3'-processing endonuclease activity. Probably involved in tRNA maturation, by removing a 3'-trailer from precursor tRNA. This chain is Ribonuclease Z, found in Pseudomonas putida (strain GB-1).